Consider the following 1268-residue polypeptide: Vigilin (1268 aa).

N-acetylserine is present on serine 2. At threonine 8 the chain carries Phosphothreonine. A phosphoserine mark is found at serine 11, serine 31, and serine 35. 14 KH domains span residues 158-229 (PKEH…RLEV), 230-302 (EKAF…AVEV), 303-371 (KKSQ…SVAA), 372-442 (PSWL…EINI), 443-514 (DHKF…DLII), 515-588 (EQRF…SVPI), 589-660 (FKQF…EVSI), 661-734 (PAKL…DIRA), 735-807 (KPEY…SMLV), 808-880 (DPKH…ECAI), 881-979 (PQKF…EVEV), 980-1059 (PFDL…SVTV), 1060-1134 (DPKY…DVPL), and 1135-1209 (DHRV…ALQV). A phosphothreonine mark is found at threonine 295 and threonine 296. Serine 317 is subject to Phosphoserine. Position 437 is a phosphotyrosine (tyrosine 437). Position 645 is a phosphoserine (serine 645). Positions 914 to 944 (ENAVHSTEPVVQENGDEAGEGREAKDCDPGS) are disordered. A compositionally biased stretch (basic and acidic residues) spans 932 to 944 (GEGREAKDCDPGS). Lysine 991 bears the N6-acetyllysine mark. The tract at residues 1233-1268 (WTASSSEKAPDMSSSEEFPSFGAQVAPKTLPWGPKR) is disordered. Polar residues predominate over residues 1234 to 1249 (TASSSEKAPDMSSSEE). Phosphoserine is present on residues serine 1247 and serine 1252.

The protein localises to the cytoplasm. Its subcellular location is the nucleus. Its function is as follows. Appears to play a role in cell sterol metabolism. It may function to protect cells from over-accumulation of cholesterol. The chain is Vigilin (HDLBP) from Homo sapiens (Human).